Reading from the N-terminus, the 283-residue chain is Pantothenate synthetase (283 aa).

30–37 is an ATP binding site; that stretch reads MGNLHDAH. Histidine 37 functions as the Proton donor in the catalytic mechanism. A (R)-pantoate-binding site is contributed by glutamine 61. Beta-alanine is bound at residue glutamine 61. 149 to 152 serves as a coordination point for ATP; it reads GVKD. Glutamine 155 contributes to the (R)-pantoate binding site. ATP is bound by residues valine 178 and 186–189; that span reads MSSR.

The protein belongs to the pantothenate synthetase family. Homodimer.

The protein resides in the cytoplasm. The catalysed reaction is (R)-pantoate + beta-alanine + ATP = (R)-pantothenate + AMP + diphosphate + H(+). It functions in the pathway cofactor biosynthesis; (R)-pantothenate biosynthesis; (R)-pantothenate from (R)-pantoate and beta-alanine: step 1/1. Functionally, catalyzes the condensation of pantoate with beta-alanine in an ATP-dependent reaction via a pantoyl-adenylate intermediate. The polypeptide is Pantothenate synthetase (Cellvibrio japonicus (strain Ueda107) (Pseudomonas fluorescens subsp. cellulosa)).